The chain runs to 86 residues: Large ribosomal subunit protein uL23 (86 aa).

Belongs to the universal ribosomal protein uL23 family. In terms of assembly, part of the 50S ribosomal subunit. Contacts protein L29.

Its function is as follows. Binds to 23S rRNA. One of the proteins that surrounds the polypeptide exit tunnel on the outside of the ribosome. This chain is Large ribosomal subunit protein uL23, found in Thermococcus onnurineus (strain NA1).